A 398-amino-acid chain; its full sequence is Delta-aminolevulinic acid dehydratase, chloroplastic (398 aa).

Positions 48–87 are disordered; sequence VPEAPPVPPTPASPAGTPVVPSLPIQRRPRRNRRSPALRS. Pro residues predominate over residues 50–59; sequence EAPPVPPTPA. Positions 60–69 are enriched in low complexity; sequence SPAGTPVVPS. The segment covering 74 to 83 has biased composition (basic residues); sequence RRPRRNRRSP. Lys-266 acts as the Schiff-base intermediate with substrate in catalysis. Residues Arg-276 and Lys-288 each coordinate 5-aminolevulinate. Glu-304 provides a ligand contact to Mg(2+). Lys-319 (schiff-base intermediate with substrate) is an active-site residue. 5-aminolevulinate-binding residues include Ser-345 and Tyr-384.

It belongs to the ALAD family. In terms of assembly, homooctamer; formed by oligomerization of dimers. Probably also forms lower oligomers. Mg(2+) serves as cofactor.

The protein resides in the plastid. It localises to the chloroplast. It catalyses the reaction 2 5-aminolevulinate = porphobilinogen + 2 H2O + H(+). The protein operates within porphyrin-containing compound metabolism; protoporphyrin-IX biosynthesis; coproporphyrinogen-III from 5-aminolevulinate: step 1/4. With respect to regulation, activated by magnesium. Inhibited by succinyl acetone. Enzyme activity may depend on the oligomerization state, where the fully active octamer may dissociate and reassemble into less active lower oligomers. Catalyzes an early step in the biosynthesis of tetrapyrroles. Binds two molecules of 5-aminolevulinate per subunit, each at a distinct site, and catalyzes their condensation to form porphobilinogen. This is Delta-aminolevulinic acid dehydratase, chloroplastic (HEMB) from Pisum sativum (Garden pea).